We begin with the raw amino-acid sequence, 249 residues long: Proteasome subunit alpha type-7-1A (249 aa).

The protein belongs to the peptidase T1A family. In terms of assembly, the 26S proteasome consists of a 20S proteasome core and two 19S regulatory subunits. The 20S proteasome core is composed of 28 subunits that are arranged in four stacked rings, resulting in a barrel-shaped structure. The two end rings are each formed by seven alpha subunits, and the two central rings are each formed by seven beta subunits. The catalytic chamber with the active sites is on the inside of the barrel. As to expression, testis specific.

It is found in the cytoplasm. It localises to the nucleus. Functionally, the proteasome is a multicatalytic proteinase complex which is characterized by its ability to cleave peptides with Arg, Phe, Tyr, Leu, and Glu adjacent to the leaving group at neutral or slightly basic pH. The proteasome has an ATP-dependent proteolytic activity. The protein is Proteasome subunit alpha type-7-1A (Prosalpha4T1) of Drosophila melanogaster (Fruit fly).